The primary structure comprises 152 residues: MLP-like protein 165 (152 aa).

It belongs to the MLP family.

This chain is MLP-like protein 165 (MLP165), found in Arabidopsis thaliana (Mouse-ear cress).